Reading from the N-terminus, the 742-residue chain is Envelope glycoprotein H (742 aa).

An N-terminal signal peptide occupies residues 1-23 (MRPGLPSYLIILAVCLFSHLLSS). Over 24–719 (RYGAEAVSEP…VVDATDSRLL (696 aa)) the chain is Virion surface. N-linked (GlcNAc...) asparagine; by host glycosylation is found at asparagine 55, asparagine 62, asparagine 67, and asparagine 192. Cysteine 195 and cysteine 211 form a disulfide bridge. Residues 217-280 (YLIDELRYVK…QTEKHELLVL (64 aa)) are interaction with gL. Disulfide bonds link cysteine 330–cysteine 383, cysteine 495–cysteine 522, and cysteine 571–cysteine 624. N-linked (GlcNAc...) asparagine; by host glycosylation is found at asparagine 641 and asparagine 700. The helical transmembrane segment at 720 to 740 (MMSVYALSAIIGIYLLYRMLK) threads the bilayer. Over 741-742 (TC) the chain is Intravirion.

The protein belongs to the herpesviridae glycoprotein H family. As to quaternary structure, interacts with glycoprotein L (gL); this interaction is necessary for the correct processing and cell surface expression of gH. The heterodimer gH/gL seems to interact with gB trimers during fusion. Forms the envelope pentamer complex (PC) composed of gH, gL, UL128, UL130, and UL131A. The pentamer interacts with host NRP2. Forms the envelope trimer complex composed of gH, gL, and gO. The trimer interacts with host PDGFRA. The trimer also interacts with host EPHA2. The trimer also interacts with host TGFBR3. Interacts with UL116. In terms of processing, N-glycosylated, O-glycosylated, and sialylated.

The protein localises to the virion membrane. It is found in the host cell membrane. The protein resides in the host endosome membrane. Its function is as follows. The heterodimer glycoprotein H-glycoprotein L is required for the fusion of viral and plasma membranes leading to virus entry into the host cell. Following initial binding to host receptor, membrane fusion is mediated by the fusion machinery composed of gB and the heterodimer gH/gL. May also be involved in the fusion between the virion envelope and the outer nuclear membrane during virion morphogenesis. In human cytomegalovirus, forms two distincts complexes to mediate viral entry, a trimer and a pentamer at the surface of the virion envelope. The gH-gL-gO trimer is required for infection in fibroblasts by interacting with host PDGFRA, and in glioblastoma cells by interacting with host EPHA2. Thsi trimer may also be required in other cell types using host TGFBR3. The gH-gL-UL128-UL130-UL131A pentamer is essential for viral entry in epithelial, endothelial and myeloid cells via interaction with host NRP2. The protein is Envelope glycoprotein H of Human cytomegalovirus (strain Merlin) (HHV-5).